The following is a 381-amino-acid chain: MSKRDFYEVLGVSRDASERDIKKAYKRLAMKFHPDRNQGDESAADKFKEVKEAYEVLTDSQKKAAYDQYGHAAFEQGGGGFGGGFGGGGADFGDIFGDVFGDIFGGGRRGGGGHRAQRGADLRYNMELTLEEAVRGVTKEIEVPTLVHCDSCDGSGAKKGSSAETCGTCHGHGQVQMRQGFFAVQQTCPTCHGKGKIIKDPCNECHGQGRKQKTKTLNVKIPAGVDTGDRIRLSGEGEAGEMGAPSGDLYVQVHVKEHHIFERDGNNLYCEVPVSFAMAALGGEVEVPTLDGRVSLKVPSETQTGRMFRMRGKGVKGVRGGGIGDLIVKLVVETPVNLSSRQKELLKEFEESCGGEAATKHKPKSEGFFNGVKKFFDDLTS.

The 66-residue stretch at 5-70 folds into the J domain; sequence DFYEVLGVSR…QKKAAYDQYG (66 aa). The CR-type zinc-finger motif lies at 136–214; it reads GVTKEIEVPT…CHGQGRKQKT (79 aa). Positions 149, 152, 166, 169, 188, 191, 202, and 205 each coordinate Zn(2+). CXXCXGXG motif repeat units follow at residues 149 to 156, 166 to 173, 188 to 195, and 202 to 209; these read CDSCDGSG, CGTCHGHG, CPTCHGKG, and CNECHGQG.

The protein belongs to the DnaJ family. In terms of assembly, homodimer. Zn(2+) serves as cofactor.

It localises to the cytoplasm. Functionally, participates actively in the response to hyperosmotic and heat shock by preventing the aggregation of stress-denatured proteins and by disaggregating proteins, also in an autonomous, DnaK-independent fashion. Unfolded proteins bind initially to DnaJ; upon interaction with the DnaJ-bound protein, DnaK hydrolyzes its bound ATP, resulting in the formation of a stable complex. GrpE releases ADP from DnaK; ATP binding to DnaK triggers the release of the substrate protein, thus completing the reaction cycle. Several rounds of ATP-dependent interactions between DnaJ, DnaK and GrpE are required for fully efficient folding. Also involved, together with DnaK and GrpE, in the DNA replication of plasmids through activation of initiation proteins. The sequence is that of Chaperone protein DnaJ from Vibrio parahaemolyticus serotype O3:K6 (strain RIMD 2210633).